The sequence spans 290 residues: Pre-mRNA-splicing factor cwf20 (290 aa).

Disordered regions lie at residues 1-61 (MSLV…KSSF) and 114-134 (PNNSVSDLTSTGSSETVKKST). Residues 114-128 (PNNSVSDLTSTGSSE) are compositionally biased toward polar residues.

In terms of assembly, belongs to the 40S cdc5-associated complex (or cwf complex), a spliceosome sub-complex reminiscent of a late-stage spliceosome composed of the U2, U5 and U6 snRNAs and at least brr2, cdc5, cwf2/prp3, cwf3/syf1, cwf4/syf3, cwf5/ecm2, spp42/cwf6, cwf7/spf27, cwf8, cwf9, cwf10, cwf11, cwf12, prp45/cwf13, cwf14, cwf15, cwf16, cwf17, cwf18, cwf19, cwf20, cwf21, cwf22, cwf23, cwf24, cwf25, cwf26, cyp7/cwf27, cwf28, cwf29/ist3, lea1, msl1, prp5/cwf1, prp10, prp12/sap130, prp17, prp22, sap61, sap62, sap114, sap145, slu7, smb1, smd1, smd3, smf1, smg1 and syf2.

The protein resides in the nucleus. Functionally, involved in mRNA splicing where it associates with cdc5 and the other cwf proteins as part of the spliceosome. This Schizosaccharomyces pombe (strain 972 / ATCC 24843) (Fission yeast) protein is Pre-mRNA-splicing factor cwf20 (cwf20).